The primary structure comprises 268 residues: Hydroxyethylthiazole kinase 2 (268 aa).

Met-42 provides a ligand contact to substrate. ATP contacts are provided by Lys-117 and Thr-167. Residue Gly-194 participates in substrate binding.

It belongs to the Thz kinase family. Requires Mg(2+) as cofactor.

The enzyme catalyses 5-(2-hydroxyethyl)-4-methylthiazole + ATP = 4-methyl-5-(2-phosphooxyethyl)-thiazole + ADP + H(+). The protein operates within cofactor biosynthesis; thiamine diphosphate biosynthesis; 4-methyl-5-(2-phosphoethyl)-thiazole from 5-(2-hydroxyethyl)-4-methylthiazole: step 1/1. Functionally, catalyzes the phosphorylation of the hydroxyl group of 4-methyl-5-beta-hydroxyethylthiazole (THZ). In Streptococcus pneumoniae (strain CGSP14), this protein is Hydroxyethylthiazole kinase 2.